The sequence spans 428 residues: MEHISTTTLIIILIIMVVISAYFSGSETGMMTLNRYRLRHMAKQGNRSAKRVEKLLRKPDRLISLVLIGNNLVNILASALGTIVGMRLYGDAGVAIATGVLTFVVLVFAEVLPKTIAALYPEKVAYPSSFLLAPLQILMMPLVWLLNAITRMLMRMMGIKTDIVVSGSLSKEELRTIVHESRSQISRRNQDMLLSVLDLEKMTVDDIMVPRSEIIGIDINDDWKSILRQLSHSPHGRIVLYRDSLDDAISMLRVREAWRLMSEKKEFTKETMLRAADEIYFVPEGTPLSTQLVKFQRNKKKVGLVVNEYGDIQGLVTVEDILEEIVGDFTTSMSPTLAEEVTPQNDGSVIIDGTANVREINKAFNWHLPEDDARTVNGVILEALEEIPVAGTRVRIGEYDIDILDVQDNMIKQVKVFPVKPLRESVAE.

Topologically, residues 1–3 are cytoplasmic; the sequence is MEH. Residues 2–192 form the CNNM transmembrane domain; sequence EHISTTTLII…SQISRRNQDM (191 aa). Residues 4–24 traverse the membrane as a helical segment; sequence ISTTTLIIILIIMVVISAYFS. At 25-64 the chain is on the periplasmic side; it reads GSETGMMTLNRYRLRHMAKQGNRSAKRVEKLLRKPDRLIS. Residues 65-85 traverse the membrane as a helical segment; sequence LVLIGNNLVNILASALGTIVG. At 86-91 the chain is on the cytoplasmic side; the sequence is MRLYGD. The helical transmembrane segment at 92–112 threads the bilayer; it reads AGVAIATGVLTFVVLVFAEVL. Topologically, residues 113–129 are periplasmic; that stretch reads PKTIAALYPEKVAYPSS. Residues 130–150 form a helical membrane-spanning segment; sequence FLLAPLQILMMPLVWLLNAIT. Residues 151–428 are Cytoplasmic-facing; it reads RMLMRMMGIK…VKPLRESVAE (278 aa). 2 CBS domains span residues 208–270 and 272–332; these read MVPR…FTKE and MLRA…FTTS.

Belongs to the UPF0053 family.

Its subcellular location is the cell inner membrane. The protein is UPF0053 inner membrane protein YfjD (yfjD) of Escherichia coli (strain K12).